The sequence spans 385 residues: Circadian-associated transcriptional repressor (385 aa).

Residues 1 to 26 (MDSPSSVSSYSSYSLSSSFPTSPVNS) show a composition bias toward low complexity. 3 disordered regions span residues 1–108 (MDSP…SLNT), 203–233 (GGGK…EKMD), and 365–385 (GHRE…LLNL). Positions 33-45 (DSEREDKGAHGPR) are enriched in basic and acidic residues. Over residues 70 to 79 (VSGNQHTPSH) the composition is skewed to polar residues.

As to quaternary structure, interacts with PER2, CRY2, BHLHE41, HDAC1 and NR3C1. Interacts with BMAL1.

The protein resides in the nucleus. It is found in the PML body. Its function is as follows. Transcriptional repressor which forms a negative regulatory component of the circadian clock and acts independently of the circadian transcriptional repressors: CRY1, CRY2 and BHLHE41. In a histone deacetylase-dependent manner represses the transcriptional activator activity of the CLOCK-BMAL1 heterodimer. Abrogates the interaction of BMAL1 with the transcriptional coactivator CREBBP and can repress the histone acetyl-transferase activity of the CLOCK-BMAL1 heterodimer, reducing histone acetylation of its target genes. Rhythmically binds the E-box elements (5'-CACGTG-3') on circadian gene promoters and its occupancy shows circadian oscillation antiphasic to BMAL1. Interacts with the glucocorticoid receptor (NR3C1) and contributes to the repressive function in the glucocorticoid response. The polypeptide is Circadian-associated transcriptional repressor (CIART) (Homo sapiens (Human)).